The primary structure comprises 293 residues: NAD kinase (293 aa).

D72 functions as the Proton acceptor in the catalytic mechanism. Residues 72 to 73 (DG), 146 to 147 (ND), R157, R174, D176, 187 to 192 (TAYALS), and Q247 each bind NAD(+).

This sequence belongs to the NAD kinase family. The cofactor is a divalent metal cation.

It is found in the cytoplasm. It catalyses the reaction NAD(+) + ATP = ADP + NADP(+) + H(+). Involved in the regulation of the intracellular balance of NAD and NADP, and is a key enzyme in the biosynthesis of NADP. Catalyzes specifically the phosphorylation on 2'-hydroxyl of the adenosine moiety of NAD to yield NADP. The sequence is that of NAD kinase from Teredinibacter turnerae (strain ATCC 39867 / T7901).